A 775-amino-acid polypeptide reads, in one-letter code: Homoaconitase, mitochondrial (775 aa).

The N-terminal 29 residues, 1 to 29, are a transit peptide targeting the mitochondrion; the sequence is MQSRLMPSGGPGRRWAFLRVPSTPQRRAF. The [4Fe-4S] cluster site is built by Cys-392, Cys-461, and Cys-464.

Belongs to the aconitase/IPM isomerase family. Requires [4Fe-4S] cluster as cofactor.

The protein resides in the mitochondrion. It carries out the reaction (2R,3S)-homoisocitrate = cis-homoaconitate + H2O. Its pathway is amino-acid biosynthesis; L-lysine biosynthesis via AAA pathway; L-alpha-aminoadipate from 2-oxoglutarate: step 3/5. In terms of biological role, catalyzes the reversible hydration of cis-homoaconitate to (2R,3S)-homoisocitrate, a step in the alpha-aminoadipate pathway for lysine biosynthesis. This chain is Homoaconitase, mitochondrial (lys4), found in Aspergillus oryzae (strain ATCC 42149 / RIB 40) (Yellow koji mold).